We begin with the raw amino-acid sequence, 213 residues long: Transmembrane protein 186 (213 aa).

Topologically, residues 1-79 are mitochondrial matrix; it reads MAALLRAVRR…FLSRLKLAQT (79 aa). A helical membrane pass occupies residues 80 to 100; the sequence is ALTVVALPPGYYLYSQGLLTL. Over 101-102 the chain is Mitochondrial intermembrane; sequence NT. A helical transmembrane segment spans residues 103–123; sequence VCLMSGISGFALTMLCWMSYF. Topologically, residues 124-213 are mitochondrial matrix; sequence LRRLVGILYL…QVFGVHQMLK (90 aa).

The protein belongs to the TMEM186 family. In terms of assembly, part of the mitochondrial complex I assembly/MCIA complex that comprises at least the core subunits TMEM126B, NDUFAF1, ECSIT and ACAD9 and complement subunits such as COA1 and TMEM186. Interacts with MT-ND3.

The protein resides in the mitochondrion inner membrane. Functionally, as part of the MCIA complex, required for efficient assembly of the mitochondrial complex I. This is Transmembrane protein 186 from Homo sapiens (Human).